We begin with the raw amino-acid sequence, 165 residues long: Nascent polypeptide-associated complex subunit alpha (165 aa).

Positions 14 to 78 constitute an NAC-A/B domain; that stretch reads NRNEKKAREL…AKVDNFTQRL (65 aa). A UBA domain is found at 126–165; it reads LSNDDIDLVVQQTNATKGQAIKALKEHNGDIVNAIMSLSK.

It belongs to the NAC-alpha family. In terms of assembly, part of the nascent polypeptide-associated complex (NAC), consisting of EGD2 and EGD1. NAC associates with ribosomes via EGD1.

It is found in the cytoplasm. Its subcellular location is the nucleus. Its function is as follows. Component of the nascent polypeptide-associated complex (NAC), a dynamic component of the ribosomal exit tunnel, protecting the emerging polypeptides from interaction with other cytoplasmic proteins to ensure appropriate nascent protein targeting. The NAC complex also promotes mitochondrial protein import by enhancing productive ribosome interactions with the outer mitochondrial membrane and blocks the inappropriate interaction of ribosomes translating non-secretory nascent polypeptides with translocation sites in the membrane of the endoplasmic reticulum. EGD2 may also be involved in transcription regulation. This Candida glabrata (strain ATCC 2001 / BCRC 20586 / JCM 3761 / NBRC 0622 / NRRL Y-65 / CBS 138) (Yeast) protein is Nascent polypeptide-associated complex subunit alpha (EGD2).